We begin with the raw amino-acid sequence, 372 residues long: Ciliary neurotrophic factor receptor subunit alpha (372 aa).

Residues 1-22 (MAASVPWACCAVLAAAAAAVYT) form the signal peptide. Residues 27–104 (PQEAPHVQYE…WHLRHQVLLH (78 aa)) enclose the Ig-like C2-type domain. A disulfide bridge links Cys46 with Cys89. 5 N-linked (GlcNAc...) asparagine glycosylation sites follow: Asn60, Asn70, Asn142, Asn190, and Asn261. Fibronectin type-III domains follow at residues 108–205 (PPRE…VKPD) and 206–306 (PPEN…TEEP). Positions 290-294 (WSDWS) match the WSXWS motif motif. Residues 301-339 (PWTEEPRHLTTEAQAPETTTSTTSSLAPPPTTKICDPGE) are disordered. A compositionally biased stretch (low complexity) spans 311–326 (TEAQAPETTTSTTSSL). Residue Ser342 is the site of GPI-anchor amidated serine attachment. A propeptide spans 343–372 (GGGPSIPFLTSVPVTLVLAAAAATANNLLI) (removed in mature form).

Belongs to the type I cytokine receptor family. Type 3 subfamily. In terms of assembly, forms a heterotrimer with LIFR and IL6ST. Interacts with heterodimeric neurotropic cytokine composed of CLCF1/CLC and CRLF1/CLF-1. Either alone or in complex with the heterodimer CLCF1-CRLF1 interacts with SORL1; this interaction may promote internalization and lysosomal degradation. Nervous system.

The protein localises to the cell membrane. In terms of biological role, binds to CNTF. The alpha subunit provides the receptor specificity. This is Ciliary neurotrophic factor receptor subunit alpha (Cntfr) from Rattus norvegicus (Rat).